The primary structure comprises 391 residues: Nuclear hormone receptor family member nhr-218 (391 aa).

The nuclear receptor DNA-binding region spans 17–93; it reads PIPCQICTYQ…MGMKAEKIQQ (77 aa). 2 NR C4-type zinc fingers span residues 20-40 and 56-76; these read CQIC…CRAC and CKTR…CRLC. An NR LBD domain is found at 146 to 391; that stretch reads SRNYSDSPLT…DNFCNLFAMK (246 aa).

The protein belongs to the nuclear hormone receptor family.

The protein resides in the nucleus. In terms of biological role, orphan nuclear receptor. The polypeptide is Nuclear hormone receptor family member nhr-218 (nhr-218) (Caenorhabditis elegans).